Here is a 67-residue protein sequence, read N- to C-terminus: ATP synthase F(0) complex subunit 8 (67 aa).

A helical membrane pass occupies residues 8–24; that stretch reads TWSITIMSMIMTLFIVF. Lys54 carries the N6-acetyllysine; alternate modification. Position 54 is an N6-succinyllysine; alternate (Lys54). An N6-acetyllysine modification is found at Lys57.

This sequence belongs to the ATPase protein 8 family. Component of the ATP synthase complex composed at least of ATP5F1A/subunit alpha, ATP5F1B/subunit beta, ATP5MC1/subunit c (homooctomer), MT-ATP6/subunit a, MT-ATP8/subunit 8, ATP5ME/subunit e, ATP5MF/subunit f, ATP5MG/subunit g, ATP5MK/subunit k, ATP5MJ/subunit j, ATP5F1C/subunit gamma, ATP5F1D/subunit delta, ATP5F1E/subunit epsilon, ATP5PF/subunit F6, ATP5PB/subunit b, ATP5PD/subunit d, ATP5PO/subunit OSCP. ATP synthase complex consists of a soluble F(1) head domain (subunits alpha(3) and beta(3)) - the catalytic core - and a membrane F(0) domain - the membrane proton channel (subunits c, a, 8, e, f, g, k and j). These two domains are linked by a central stalk (subunits gamma, delta, and epsilon) rotating inside the F1 region and a stationary peripheral stalk (subunits F6, b, d, and OSCP). Interacts with PRICKLE3.

It localises to the mitochondrion membrane. In terms of biological role, subunit 8, of the mitochondrial membrane ATP synthase complex (F(1)F(0) ATP synthase or Complex V) that produces ATP from ADP in the presence of a proton gradient across the membrane which is generated by electron transport complexes of the respiratory chain. ATP synthase complex consist of a soluble F(1) head domain - the catalytic core - and a membrane F(1) domain - the membrane proton channel. These two domains are linked by a central stalk rotating inside the F(1) region and a stationary peripheral stalk. During catalysis, ATP synthesis in the catalytic domain of F(1) is coupled via a rotary mechanism of the central stalk subunits to proton translocation. In vivo, can only synthesize ATP although its ATP hydrolase activity can be activated artificially in vitro. Part of the complex F(0) domain. The polypeptide is ATP synthase F(0) complex subunit 8 (Felis catus (Cat)).